The primary structure comprises 113 residues: U11-theraphotoxin-Hhn1a (113 aa).

Residues Met-1–Ala-21 form the signal peptide. The propeptide occupies Asp-22–Arg-74. Cystine bridges form between Cys-75–Cys-90, Cys-82–Cys-95, and Cys-89–Cys-110.

The protein belongs to the neurotoxin 14 (magi-1) family. 01 (HNTX-16) subfamily. In terms of tissue distribution, expressed by the venom gland.

It localises to the secreted. Functionally, probable ion channel inhibitor. This is U11-theraphotoxin-Hhn1a from Cyriopagopus hainanus (Chinese bird spider).